Consider the following 140-residue polypeptide: Putative nickel-responsive regulator (140 aa).

Ni(2+)-binding residues include His-81, His-92, His-94, and Cys-100.

It belongs to the transcriptional regulatory CopG/NikR family. It depends on Ni(2+) as a cofactor.

Its function is as follows. Transcriptional regulator. This Methanocella arvoryzae (strain DSM 22066 / NBRC 105507 / MRE50) protein is Putative nickel-responsive regulator.